The chain runs to 457 residues: UDP-N-acetylmuramate--L-alanine ligase (457 aa).

109-115 lines the ATP pocket; the sequence is GTDGKTT.

The protein belongs to the MurCDEF family.

The protein localises to the cytoplasm. It catalyses the reaction UDP-N-acetyl-alpha-D-muramate + L-alanine + ATP = UDP-N-acetyl-alpha-D-muramoyl-L-alanine + ADP + phosphate + H(+). It participates in cell wall biogenesis; peptidoglycan biosynthesis. Functionally, cell wall formation. The protein is UDP-N-acetylmuramate--L-alanine ligase (murC) of Thermotoga maritima (strain ATCC 43589 / DSM 3109 / JCM 10099 / NBRC 100826 / MSB8).